The chain runs to 198 residues: GTP cyclohydrolase-2 (198 aa).

A GTP-binding site is contributed by 49 to 53 (RVHSE). Residues Cys54, Cys65, and Cys67 each coordinate Zn(2+). GTP is bound by residues Gln70, 92-94 (EGR), and Thr114. The active-site Proton acceptor is the Asp126. The active-site Nucleophile is Arg128. Thr149 and Lys154 together coordinate GTP.

Belongs to the GTP cyclohydrolase II family. Homodimer. The cofactor is Zn(2+).

The enzyme catalyses GTP + 4 H2O = 2,5-diamino-6-hydroxy-4-(5-phosphoribosylamino)-pyrimidine + formate + 2 phosphate + 3 H(+). The protein operates within cofactor biosynthesis; riboflavin biosynthesis; 5-amino-6-(D-ribitylamino)uracil from GTP: step 1/4. Catalyzes the conversion of GTP to 2,5-diamino-6-ribosylamino-4(3H)-pyrimidinone 5'-phosphate (DARP), formate and pyrophosphate. In Escherichia fergusonii (strain ATCC 35469 / DSM 13698 / CCUG 18766 / IAM 14443 / JCM 21226 / LMG 7866 / NBRC 102419 / NCTC 12128 / CDC 0568-73), this protein is GTP cyclohydrolase-2.